The following is a 141-amino-acid chain: Nucleoside diphosphate kinase (141 aa).

Residues Lys11, Phe59, Arg87, Thr93, Arg104, and Asn114 each coordinate ATP. Residue His117 is the Pros-phosphohistidine intermediate of the active site.

The protein belongs to the NDK family. Homotetramer. Mg(2+) is required as a cofactor.

Its subcellular location is the cytoplasm. It catalyses the reaction a 2'-deoxyribonucleoside 5'-diphosphate + ATP = a 2'-deoxyribonucleoside 5'-triphosphate + ADP. It carries out the reaction a ribonucleoside 5'-diphosphate + ATP = a ribonucleoside 5'-triphosphate + ADP. Major role in the synthesis of nucleoside triphosphates other than ATP. The ATP gamma phosphate is transferred to the NDP beta phosphate via a ping-pong mechanism, using a phosphorylated active-site intermediate. The polypeptide is Nucleoside diphosphate kinase (Proteus mirabilis (strain HI4320)).